The sequence spans 1142 residues: Zinc finger MYM-type protein 1 (1142 aa).

Residue lysine 25 forms a Glycyl lysine isopeptide (Lys-Gly) (interchain with G-Cter in SUMO2) linkage. MYM-type zinc fingers lie at residues 110–148 (QLFCSIPCITEYISSASSPVPSKRTCSNCSKDILNPKDV), 160–203 (KTFC…QYEV), and 210–245 (HNLCSNACLSKFHSANNFIMNCCENCGTYCYTSSSL). Lysine 284 participates in a covalent cross-link: Glycyl lysine isopeptide (Lys-Gly) (interchain with G-Cter in SUMO2). The MYM-type 4 zinc finger occupies 300-331 (ELFCSINCFSAYSKAKMESSSVSVVSVVHDTS). Polar residues predominate over residues 385–396 (KSSPSEPSNAVA). A disordered region spans residues 385 to 413 (KSSPSEPSNAVASSSTEQPSVSPSSSVFS). Positions 397–413 (SSSTEQPSVSPSSSVFS) are enriched in low complexity. The segment at 452–538 (KSRSIKKSCC…YQFCDGAVSD (87 aa)) adopts a TTF-type zinc-finger fold.

The protein localises to the nucleus. The protein is Zinc finger MYM-type protein 1 (ZMYM1) of Homo sapiens (Human).